The chain runs to 499 residues: Aspartyl/glutamyl-tRNA(Asn/Gln) amidotransferase subunit B (499 aa).

The protein belongs to the GatB/GatE family. GatB subfamily. Heterotrimer of A, B and C subunits.

It carries out the reaction L-glutamyl-tRNA(Gln) + L-glutamine + ATP + H2O = L-glutaminyl-tRNA(Gln) + L-glutamate + ADP + phosphate + H(+). It catalyses the reaction L-aspartyl-tRNA(Asn) + L-glutamine + ATP + H2O = L-asparaginyl-tRNA(Asn) + L-glutamate + ADP + phosphate + 2 H(+). In terms of biological role, allows the formation of correctly charged Asn-tRNA(Asn) or Gln-tRNA(Gln) through the transamidation of misacylated Asp-tRNA(Asn) or Glu-tRNA(Gln) in organisms which lack either or both of asparaginyl-tRNA or glutaminyl-tRNA synthetases. The reaction takes place in the presence of glutamine and ATP through an activated phospho-Asp-tRNA(Asn) or phospho-Glu-tRNA(Gln). This Bartonella tribocorum (strain CIP 105476 / IBS 506) protein is Aspartyl/glutamyl-tRNA(Asn/Gln) amidotransferase subunit B.